The following is a 307-amino-acid chain: Ubiquinol oxidase subunit 2 (307 aa).

Positions 1 to 23 (MKNKLLARVARLGGLSSALLLAG) are cleaved as a signal peptide. Cys24 carries N-palmitoyl cysteine lipidation. Cys24 is lipidated: S-diacylglycerol cysteine. 2 consecutive transmembrane segments (helical) span residues 46 to 66 (STVA…LFAW) and 87 to 107 (IEVT…VITY).

It belongs to the cytochrome c oxidase subunit 2 family. As to quaternary structure, heterotetramer of the subunits 1, 2, 3 and 4.

Its subcellular location is the cell membrane. The chain is Ubiquinol oxidase subunit 2 (cyaB) from Acetobacter aceti.